The chain runs to 242 residues: Probable transcriptional regulatory protein EF_0663 (242 aa).

The span at 1–14 (MSGHSKWSNIQGRK) shows a compositional bias: polar residues. Residues 1-22 (MSGHSKWSNIQGRKNAQDAKRG) are disordered.

This sequence belongs to the TACO1 family.

The protein resides in the cytoplasm. The polypeptide is Probable transcriptional regulatory protein EF_0663 (Enterococcus faecalis (strain ATCC 700802 / V583)).